The following is a 947-amino-acid chain: Bifunctional glutamine synthetase adenylyltransferase/adenylyl-removing enzyme (947 aa).

Residues 1–440 (MTPLSSPLSQ…VFNELIGDDE (440 aa)) form an adenylyl removase region. An adenylyl transferase region spans residues 450 to 947 (SEPWREVWQD…ASWRKWLVAV (498 aa)).

Belongs to the GlnE family. Mg(2+) serves as cofactor.

The enzyme catalyses [glutamine synthetase]-O(4)-(5'-adenylyl)-L-tyrosine + phosphate = [glutamine synthetase]-L-tyrosine + ADP. It catalyses the reaction [glutamine synthetase]-L-tyrosine + ATP = [glutamine synthetase]-O(4)-(5'-adenylyl)-L-tyrosine + diphosphate. Functionally, involved in the regulation of glutamine synthetase GlnA, a key enzyme in the process to assimilate ammonia. When cellular nitrogen levels are high, the C-terminal adenylyl transferase (AT) inactivates GlnA by covalent transfer of an adenylyl group from ATP to specific tyrosine residue of GlnA, thus reducing its activity. Conversely, when nitrogen levels are low, the N-terminal adenylyl removase (AR) activates GlnA by removing the adenylyl group by phosphorolysis, increasing its activity. The regulatory region of GlnE binds the signal transduction protein PII (GlnB) which indicates the nitrogen status of the cell. The protein is Bifunctional glutamine synthetase adenylyltransferase/adenylyl-removing enzyme of Salmonella gallinarum (strain 287/91 / NCTC 13346).